We begin with the raw amino-acid sequence, 204 residues long: Inactive ribonuclease-like protein 9 (204 aa).

The signal sequence occupies residues 1–26 (MMRTLITIHPLPLLLLLQQLLQPVQF). Intrachain disulfides connect cysteine 97–cysteine 152, cysteine 115–cysteine 167, and cysteine 122–cysteine 129. 2 N-linked (GlcNAc...) asparagine glycosylation sites follow: asparagine 130 and asparagine 142.

The protein belongs to the pancreatic ribonuclease family.

Its subcellular location is the secreted. In terms of biological role, does not exhibit any ribonuclease activity. This is Inactive ribonuclease-like protein 9 (RNASE9) from Symphalangus syndactylus (Siamang).